The following is an 879-amino-acid chain: Translation initiation factor IF-2 (879 aa).

2 disordered regions span residues 45–216 (AGHM…ERKR) and 228–293 (SYEE…EKPV). Basic and acidic residues-rich tracts occupy residues 60–72 (NAAK…DKNS), 83–99 (RKTD…KISP), and 107–163 (AEKK…ERLQ). The span at 164 to 173 (MEAALQAQMQ) shows a compositional bias: low complexity. Basic and acidic residues-rich tracts occupy residues 174–216 (EQER…ERKR), 228–271 (SYEE…ERRN), and 280–291 (RNNDNKKGKFEK). The 170-residue stretch at 380–549 (VRAPVVTIMG…LIQAEMLELT (170 aa)) folds into the tr-type G domain. The tract at residues 389–396 (GHVDHGKT) is G1. 389-396 (GHVDHGKT) is a GTP binding site. The segment at 414–418 (GITQH) is G2. The G3 stretch occupies residues 435 to 438 (DTPG). Residues 435-439 (DTPGH) and 489-492 (NKMD) each bind GTP. Residues 489–492 (NKMD) form a G4 region. The interval 525–527 (SAK) is G5.

The protein belongs to the TRAFAC class translation factor GTPase superfamily. Classic translation factor GTPase family. IF-2 subfamily.

The protein resides in the cytoplasm. One of the essential components for the initiation of protein synthesis. Protects formylmethionyl-tRNA from spontaneous hydrolysis and promotes its binding to the 30S ribosomal subunits. Also involved in the hydrolysis of GTP during the formation of the 70S ribosomal complex. The chain is Translation initiation factor IF-2 from Dichelobacter nodosus (strain VCS1703A).